We begin with the raw amino-acid sequence, 1249 residues long: DNA-directed RNA polymerase subunit beta (1249 aa).

Belongs to the RNA polymerase beta chain family. The RNAP catalytic core consists of 2 alpha, 1 beta, 1 beta' and 1 omega subunit. When a sigma factor is associated with the core the holoenzyme is formed, which can initiate transcription.

It carries out the reaction RNA(n) + a ribonucleoside 5'-triphosphate = RNA(n+1) + diphosphate. DNA-dependent RNA polymerase catalyzes the transcription of DNA into RNA using the four ribonucleoside triphosphates as substrates. The polypeptide is DNA-directed RNA polymerase subunit beta (Clostridium botulinum (strain Eklund 17B / Type B)).